Here is a 211-residue protein sequence, read N- to C-terminus: MRKKPVVIGVAGGSGSGKTTVTKAIYEHFQGHSILMLEQDFYYKDQSHLPFEERLKTNYDHPLAFDNDLLIEHIHKLLNYEPIDKPVYDYTLHTRSNEVIRVEPKDVIILEGILVLEDERLRNLMDIKVYVDTDADIRIIRRLLRDIKERGRTLESVIEQYVNVVRPMHNQFIEPTKRYADIIIPEGGHNHVAIDLMVTKIQTILEQNSIL.

Glycine 12–threonine 19 serves as a coordination point for ATP.

The protein belongs to the uridine kinase family.

The protein localises to the cytoplasm. The catalysed reaction is uridine + ATP = UMP + ADP + H(+). The enzyme catalyses cytidine + ATP = CMP + ADP + H(+). The protein operates within pyrimidine metabolism; CTP biosynthesis via salvage pathway; CTP from cytidine: step 1/3. It participates in pyrimidine metabolism; UMP biosynthesis via salvage pathway; UMP from uridine: step 1/1. This is Uridine kinase from Anoxybacillus flavithermus (strain DSM 21510 / WK1).